The chain runs to 184 residues: UPF0149 protein PA14_69010 (184 aa).

The protein belongs to the UPF0149 family.

The chain is UPF0149 protein PA14_69010 from Pseudomonas aeruginosa (strain UCBPP-PA14).